Reading from the N-terminus, the 179-residue chain is Repressor of phase 1 flagellin gene (179 aa).

Its function is as follows. Transcriptional repressor of the FliC phase-1 flagellin. The sequence is that of Repressor of phase 1 flagellin gene (fljA) from Salmonella typhimurium (strain LT2 / SGSC1412 / ATCC 700720).